The primary structure comprises 406 residues: MPPALYLSGPCEICEQPAHGNHFGVLSCRACAAFFRRAALQNAKYQDRVCRKGNCIGNDLYRCKICRLKKCCEVGMNSSKFQNDRDLISSSLRPTNYTKTSAPQSLANFLGRPEFILCCEPDKASSTKRLVDVTSLVDKAWAIFQEDAAYSWSPNHYPNSLEKLTFEMEEIKLKESSKKLEIATTIGRNEALLFLEQSFLGAAQWFARLPEFSMLDPQIKIDILKTSWMIWARLDKLAATADFHRQKLLGNDVYMWTDNTCMNPGNVKIDIKWSSNYSVEQLRGFLVPDIEKYWRHALSDLVELDPTNVELNFMLIQLCLNSAGQKYQGHVLEATEKILQIQSDNMHEYYTKKLKLVNYSGRLARLMKINRAIEADVRDRKEKNHIAKVFDLFFVEYSHPEMFEFS.

The nuclear receptor DNA-binding region spans 8–83 (SGPCEICEQP…VGMNSSKFQN (76 aa)). Residues 11–31 (CEICEQPAHGNHFGVLSCRAC) form an NR C4-type zinc finger. The NR C4-type; degenerate zinc-finger motif lies at 47–66 (DRVCRKGNCIGNDLYRCKIC). The NR LBD domain occupies 150–406 (YSWSPNHYPN…YSHPEMFEFS (257 aa)).

The protein belongs to the nuclear hormone receptor family.

Its subcellular location is the nucleus. Functionally, orphan nuclear receptor. In Caenorhabditis elegans, this protein is Nuclear hormone receptor family member nhr-133.